A 110-amino-acid polypeptide reads, in one-letter code: UPF0122 protein SGO_1122 (110 aa).

Belongs to the UPF0122 family.

In terms of biological role, might take part in the signal recognition particle (SRP) pathway. This is inferred from the conservation of its genetic proximity to ftsY/ffh. May be a regulatory protein. The sequence is that of UPF0122 protein SGO_1122 from Streptococcus gordonii (strain Challis / ATCC 35105 / BCRC 15272 / CH1 / DL1 / V288).